Consider the following 366-residue polypeptide: Probable cinnamyl alcohol dehydrogenase 3 (366 aa).

C53 serves as a coordination point for Zn(2+). NADP(+) is bound at residue S55. The Zn(2+) site is built by H75, E76, C106, C109, C112, C120, and C169. NADP(+)-binding positions include T173, 194–199, 217–222, T257, G281, and 304–306; these read GLGGLG, SSSPGK, and SNI.

The protein belongs to the zinc-containing alcohol dehydrogenase family. Homodimer. Zn(2+) serves as cofactor.

The enzyme catalyses (E)-cinnamyl alcohol + NADP(+) = (E)-cinnamaldehyde + NADPH + H(+). It catalyses the reaction (E)-coniferol + NADP(+) = (E)-coniferaldehyde + NADPH + H(+). The catalysed reaction is (E)-sinapyl alcohol + NADP(+) = (E)-sinapaldehyde + NADPH + H(+). It carries out the reaction (E)-4-coumaroyl alcohol + NADP(+) = (E)-4-coumaraldehyde + NADPH + H(+). The enzyme catalyses (E)-caffeyl alcohol + NADP(+) = (E)-caffeyl aldehyde + NADPH + H(+). It functions in the pathway aromatic compound metabolism; phenylpropanoid biosynthesis. Functionally, involved in lignin biosynthesis. Catalyzes the final step specific for the production of lignin monomers. Catalyzes the NADPH-dependent reduction of coniferaldehyde, 5-hydroxyconiferaldehyde, sinapaldehyde, 4-coumaraldehyde and caffeyl aldehyde to their respective alcohols. In Oryza sativa subsp. japonica (Rice), this protein is Probable cinnamyl alcohol dehydrogenase 3.